The primary structure comprises 199 residues: Probable nicotinate-nucleotide adenylyltransferase (199 aa).

It belongs to the NadD family.

The catalysed reaction is nicotinate beta-D-ribonucleotide + ATP + H(+) = deamido-NAD(+) + diphosphate. Its pathway is cofactor biosynthesis; NAD(+) biosynthesis; deamido-NAD(+) from nicotinate D-ribonucleotide: step 1/1. Its function is as follows. Catalyzes the reversible adenylation of nicotinate mononucleotide (NaMN) to nicotinic acid adenine dinucleotide (NaAD). This chain is Probable nicotinate-nucleotide adenylyltransferase, found in Rhizobium johnstonii (strain DSM 114642 / LMG 32736 / 3841) (Rhizobium leguminosarum bv. viciae).